Reading from the N-terminus, the 373-residue chain is MPRVSTHLVKLAAAALCALLLSAVAASATSRIKDLANIEGIRQNQLIGYGLVVGLNGTGDTLNNIPFTKQSLQAMLERMGVNIRGATIRTGNVAAVMVTGNLPPFATQGTRMDVTVSALGDAKNLQGGTLLVTPLLGADGNVYAVAQGSLAIGGFQAEGEAAKITRGVPTVGRIANGAIIEREIEFALNRLPNVRLALRNADFTTAKRIAAAVNDYLGTKCAEPLDPSTVQLSIPGEFKGNAVALLTEIEQLQVEPDQAAKIVIDERSGIIVMGRDVRVATVAVAQGNLTVSISESPQVSQPNPLGGGRTVVTPNSRIGVTEDGKKLAVVKDGVSLQQLVDGLNSLGIGPRDLIGILQAIKAAGAIEADIEVM.

The signal sequence occupies residues 1–28; that stretch reads MPRVSTHLVKLAAAALCALLLSAVAASA.

The protein belongs to the FlgI family. The basal body constitutes a major portion of the flagellar organelle and consists of four rings (L,P,S, and M) mounted on a central rod.

The protein localises to the periplasm. The protein resides in the bacterial flagellum basal body. Assembles around the rod to form the L-ring and probably protects the motor/basal body from shearing forces during rotation. The chain is Flagellar P-ring protein from Rhodopseudomonas palustris (strain ATCC BAA-98 / CGA009).